Reading from the N-terminus, the 306-residue chain is MRGISPKRVCPICGSTEFIYDPRRGEIVCAKCGYVIEENVVDEGPEWRAFEPGQREKRARTGAPMTLMIHDKGLSTDIDWRDKDIHGNQITGMYRNKLRRLRMWQRRMRINDAAERNLAFALSELDRMAAQLRLPRHLKEVAASLYRKAVMKKLIRGRSIEGMVSAALYAACRMEGIPRTLDEIASVSKVSKKEIGRSYRFMARGLGLNLRPTSPIEYVDRFGDALGVSARTKKRAKEILNEAIKRGITSGKGPTGLAAAALYIAALLEGEKKTQREVAEVAHVTEVTVRNRYKELVEKLGINVPI.

A TFIIB-type zinc finger spans residues 6 to 37 (PKRVCPICGSTEFIYDPRRGEIVCAKCGYVIE). 4 residues coordinate Zn(2+): Cys-10, Cys-13, Cys-29, and Cys-32. 2 tandem repeats follow at residues 123-206 (SELD…ARGL) and 217-298 (EYVD…ELVE).

The protein belongs to the TFIIB family.

Its function is as follows. Stabilizes TBP binding to an archaeal box-A promoter. Also responsible for recruiting RNA polymerase II to the pre-initiation complex (DNA-TBP-TFIIB). This chain is Transcription initiation factor IIB 2, found in Thermococcus kodakarensis (strain ATCC BAA-918 / JCM 12380 / KOD1) (Pyrococcus kodakaraensis (strain KOD1)).